The primary structure comprises 293 residues: Bifunctional protein FolD (293 aa).

NADP(+) is bound by residues 165–167 (GRS), S190, and I231.

Belongs to the tetrahydrofolate dehydrogenase/cyclohydrolase family. In terms of assembly, homodimer.

The enzyme catalyses (6R)-5,10-methylene-5,6,7,8-tetrahydrofolate + NADP(+) = (6R)-5,10-methenyltetrahydrofolate + NADPH. It carries out the reaction (6R)-5,10-methenyltetrahydrofolate + H2O = (6R)-10-formyltetrahydrofolate + H(+). It participates in one-carbon metabolism; tetrahydrofolate interconversion. Its function is as follows. Catalyzes the oxidation of 5,10-methylenetetrahydrofolate to 5,10-methenyltetrahydrofolate and then the hydrolysis of 5,10-methenyltetrahydrofolate to 10-formyltetrahydrofolate. The protein is Bifunctional protein FolD of Synechococcus sp. (strain WH7803).